Consider the following 986-residue polypeptide: Ubiquitin carboxyl-terminal hydrolase 37 (986 aa).

Residues 32 to 34 carry the KEN box 1 motif; it reads KDN. 2 consecutive short sequence motifs (D-box) follow at residues 71–79 and 96–105; these read CLMLTLKDT and RMYLDAVHQD. Disordered stretches follow at residues 134–238 and 251–305; these read NRQF…MSDP and LKLK…KRSL. Basic and acidic residues predominate over residues 149-159; the sequence is VTVESKDETPF. A D-box 3 motif is present at residues 160-168; the sequence is RKVLGTPAR. A compositionally biased stretch (polar residues) spans 171 to 195; it reads VKNSSGTGAPSNRVNVAASPTSSVP. The KEN box 2 signature appears at 224–226; it reads KEN. A compositionally biased stretch (basic and acidic residues) spans 251–260; sequence LKLKQEEENR. Positions 269 to 298 are enriched in low complexity; it reads SSSYYGSRSSSKEYSTSSSTLDRSSVSSQT. In terms of domain architecture, USP spans 344-958; that stretch reads QGFSNLGNTC…SGYIFFYMHK (615 aa). The Nucleophile role is filled by cysteine 353. Disordered stretches follow at residues 683 to 710 and 729 to 751; these read VQRGIRKSSKRSKMEGDKPELGNAGFDG and SLSLSHDEDKPTSSPDTGFGDDE. The region spanning 712 to 731 is the UIM 1 domain; that stretch reads SEDELLAAVLEISKREASLS. The segment covering 729-739 has biased composition (basic and acidic residues); the sequence is SLSLSHDEDKP. Positions 789 to 791 match the KEN box 3 motif; sequence KEN. Residues 811–840 form a disordered region; it reads REREEQELQQALAQSLQEQEAREQKEDDDL. UIM domains follow at residues 813–832 and 835–854; these read REEQELQQALAQSLQEQEAR and KEDDDLKRATELSLQEFNSS. Residues 818–828 are compositionally biased toward low complexity; the sequence is LQQALAQSLQE. Residues 829–840 are compositionally biased toward basic and acidic residues; sequence QEAREQKEDDDL. Histidine 913 (proton acceptor) is an active-site residue.

Belongs to the peptidase C19 family.

The enzyme catalyses Thiol-dependent hydrolysis of ester, thioester, amide, peptide and isopeptide bonds formed by the C-terminal Gly of ubiquitin (a 76-residue protein attached to proteins as an intracellular targeting signal).. Deubiquitinase that antagonizes the anaphase-promoting complex (APC/C) during G1/S transition by mediating deubiquitination of APC/C target proteins, thereby promoting S phase entry. Specifically mediates deubiquitination of 'Lys-11'-linked polyubiquitin chains, a specific ubiquitin-linkage type mediated by the APC/C complex. This chain is Ubiquitin carboxyl-terminal hydrolase 37 (USP37), found in Gallus gallus (Chicken).